The primary structure comprises 91 residues: Small ribosomal subunit protein uS19 (91 aa).

This sequence belongs to the universal ribosomal protein uS19 family.

Functionally, protein S19 forms a complex with S13 that binds strongly to the 16S ribosomal RNA. The sequence is that of Small ribosomal subunit protein uS19 from Delftia acidovorans (strain DSM 14801 / SPH-1).